The sequence spans 237 residues: MKYTRVLLKLSGEALMGSQGYGIDPEIVHSIAEDVAKVVASGTQLAIVVGGGNIFRGLKGSAAGMDRATADYVGMLATVMNAITLQDGLERAGVPTRVQTAIAMQEVAEPYIRRKAMRHLEKGRVVVFGAGCGNPFFTTDTTAALRAAEINADVVFKATKVDGVYDKDPAKHPDAVKHDHLSYQDVLSGELGVMDATAISLCKENNIPIVVFDLFEPGNIGKAVAGEPIGSRIGNPV.

9 to 12 (KLSG) lines the ATP pocket. The interval 17-22 (GSQGYG) is involved in allosteric activation by GTP. Gly51 lines the UMP pocket. Residues Gly52 and Arg56 each contribute to the ATP site. UMP is bound by residues Asp71 and 132–139 (CGNPFFTT). ATP-binding residues include Thr159, Tyr165, and Asp168.

It belongs to the UMP kinase family. Homohexamer.

It localises to the cytoplasm. It carries out the reaction UMP + ATP = UDP + ADP. The protein operates within pyrimidine metabolism; CTP biosynthesis via de novo pathway; UDP from UMP (UMPK route): step 1/1. Its activity is regulated as follows. Allosterically activated by GTP. Inhibited by UTP. Catalyzes the reversible phosphorylation of UMP to UDP. This Synechococcus sp. (strain CC9902) protein is Uridylate kinase.